We begin with the raw amino-acid sequence, 134 residues long: Small ribosomal subunit protein uS11 (134 aa).

The segment at 115–134 (VTPIPTDSTRRKGGRRGRRL) is disordered. Basic residues predominate over residues 125–134 (RKGGRRGRRL).

Belongs to the universal ribosomal protein uS11 family.

This Syntrichia ruralis (Great hairy screw-moss) protein is Small ribosomal subunit protein uS11 (RPS14).